The chain runs to 177 residues: Large ribosomal subunit protein uL6 (177 aa).

The protein belongs to the universal ribosomal protein uL6 family. As to quaternary structure, part of the 50S ribosomal subunit.

In terms of biological role, this protein binds to the 23S rRNA, and is important in its secondary structure. It is located near the subunit interface in the base of the L7/L12 stalk, and near the tRNA binding site of the peptidyltransferase center. This chain is Large ribosomal subunit protein uL6, found in Serratia proteamaculans (strain 568).